The sequence spans 329 residues: Vanillate O-demethylase oxygenase subunit (329 aa).

Positions 1–84 (MICNERMVIY…AQERHGFIWV (84 aa)) constitute a Rieske domain. 4 residues coordinate [2Fe-2S] cluster: Cys-24, His-26, Cys-43, and His-46.

This sequence belongs to the bacterial ring-hydroxylating dioxygenase alpha subunit family. As to quaternary structure, this demethylase system consists of two proteins: an oxygenase and an oxygenase reductase. [2Fe-2S] cluster is required as a cofactor. The cofactor is Fe cation.

The enzyme catalyses vanillate + NADH + O2 + H(+) = 3,4-dihydroxybenzoate + formaldehyde + NAD(+) + H2O. It functions in the pathway xenobiotic degradation; vanillyl-alcohol degradation. This Pseudomonas sp. (strain ATCC 19151) protein is Vanillate O-demethylase oxygenase subunit (vanA).